A 143-amino-acid chain; its full sequence is Peptidyl-prolyl cis-trans isomerase B (143 aa).

The region spanning 1–143 (MKTGYFLLED…DVMKEVRVEG (143 aa)) is the PPIase cyclophilin-type domain.

It belongs to the cyclophilin-type PPIase family.

It is found in the cytoplasm. It catalyses the reaction [protein]-peptidylproline (omega=180) = [protein]-peptidylproline (omega=0). Its activity is regulated as follows. Inhibited by cyclosporin A (CsA). PPIases accelerate the folding of proteins. It catalyzes the cis-trans isomerization of proline imidic peptide bonds in oligopeptides. The protein is Peptidyl-prolyl cis-trans isomerase B (ppiB) of Bacillus subtilis (strain 168).